The sequence spans 78 residues: Putative membrane protein insertion efficiency factor (78 aa).

It belongs to the UPF0161 family.

It is found in the cell inner membrane. Its function is as follows. Could be involved in insertion of integral membrane proteins into the membrane. This is Putative membrane protein insertion efficiency factor from Prochlorococcus marinus (strain MIT 9301).